Here is a 1167-residue protein sequence, read N- to C-terminus: Chromosome partition protein Smc (1167 aa).

ATP is bound at residue Pro-32–Asn-39. Coiled coils occupy residues Ile-170–Thr-274, Gln-310–Asp-390, Gly-468–Leu-500, Ala-653–Leu-870, and Glu-982–Gly-1011.

The protein belongs to the SMC family. As to quaternary structure, homodimer.

The protein localises to the cytoplasm. Required for chromosome condensation and partitioning. This Xanthomonas oryzae pv. oryzae (strain KACC10331 / KXO85) protein is Chromosome partition protein Smc.